A 321-amino-acid chain; its full sequence is MRQLYPAIAPYQSGMLPVSALHTIYYEQSGNPNGKPVVFLHGGPGGGTIPTYRQYFDPSKWRIILFDQRGAGKSTPHAELRENTTWDLVSDIEKLRSHLNIDRWFVFGGSWGSTLSLAYSQTHPDRCLGLILRGIFLLRRKEILWFYQDGASWIFPDAWEHYLEPIPPEERDDMISAYYRRLTSKDAEIRSTAAKAWSVWEGTTSRLIVDPSLQSKFADDEFADAFARIECHYFINRGFFETDDQLLQNCDRIAHIPTVIVQGRYDVVCPMTSAWALHKALPESELIVVPDAGHSMMEAGILSALIDATDRFVAQKTNGKI.

Residues 35-296 enclose the AB hydrolase-1 domain; sequence KPVVFLHGGP…IVVPDAGHSM (262 aa). Residue Ser-110 is the Nucleophile of the active site. Asp-266 is an active-site residue. His-294 acts as the Proton donor in catalysis.

The protein belongs to the peptidase S33 family.

Its subcellular location is the cytoplasm. It catalyses the reaction Release of N-terminal proline from a peptide.. Specifically catalyzes the removal of N-terminal proline residues from peptides. The protein is Probable proline iminopeptidase (pip) of Leptolyngbya boryana (Plectonema boryanum).